Here is a 317-residue protein sequence, read N- to C-terminus: Beta-ketoacyl-[acyl-carrier-protein] synthase III (317 aa).

Catalysis depends on residues Cys-112 and His-244. The segment at 245–249 is ACP-binding; sequence QANLR. Residue Asn-274 is part of the active site.

The protein belongs to the thiolase-like superfamily. FabH family. Homodimer.

Its subcellular location is the cytoplasm. The enzyme catalyses malonyl-[ACP] + acetyl-CoA + H(+) = 3-oxobutanoyl-[ACP] + CO2 + CoA. Its pathway is lipid metabolism; fatty acid biosynthesis. In terms of biological role, catalyzes the condensation reaction of fatty acid synthesis by the addition to an acyl acceptor of two carbons from malonyl-ACP. Catalyzes the first condensation reaction which initiates fatty acid synthesis and may therefore play a role in governing the total rate of fatty acid production. Possesses both acetoacetyl-ACP synthase and acetyl transacylase activities. Its substrate specificity determines the biosynthesis of branched-chain and/or straight-chain of fatty acids. The chain is Beta-ketoacyl-[acyl-carrier-protein] synthase III from Salmonella paratyphi B (strain ATCC BAA-1250 / SPB7).